The following is a 464-amino-acid chain: ATP-dependent protease ATPase subunit HslU (464 aa).

ATP-binding positions include Ile-19, 61-66 (GVGKTE), Asp-277, Glu-342, and Arg-414.

Belongs to the ClpX chaperone family. HslU subfamily. A double ring-shaped homohexamer of HslV is capped on each side by a ring-shaped HslU homohexamer. The assembly of the HslU/HslV complex is dependent on binding of ATP.

It is found in the cytoplasm. ATPase subunit of a proteasome-like degradation complex; this subunit has chaperone activity. The binding of ATP and its subsequent hydrolysis by HslU are essential for unfolding of protein substrates subsequently hydrolyzed by HslV. HslU recognizes the N-terminal part of its protein substrates and unfolds these before they are guided to HslV for hydrolysis. This Lactobacillus johnsonii (strain CNCM I-12250 / La1 / NCC 533) protein is ATP-dependent protease ATPase subunit HslU.